Here is a 534-residue protein sequence, read N- to C-terminus: Bifunctional purine biosynthesis protein PurH (534 aa).

The MGS-like domain occupies 1 to 148 (MNTVRPIRRA…KNHQDVTIVV (148 aa)).

Belongs to the PurH family.

The catalysed reaction is (6R)-10-formyltetrahydrofolate + 5-amino-1-(5-phospho-beta-D-ribosyl)imidazole-4-carboxamide = 5-formamido-1-(5-phospho-D-ribosyl)imidazole-4-carboxamide + (6S)-5,6,7,8-tetrahydrofolate. The enzyme catalyses IMP + H2O = 5-formamido-1-(5-phospho-D-ribosyl)imidazole-4-carboxamide. It functions in the pathway purine metabolism; IMP biosynthesis via de novo pathway; 5-formamido-1-(5-phospho-D-ribosyl)imidazole-4-carboxamide from 5-amino-1-(5-phospho-D-ribosyl)imidazole-4-carboxamide (10-formyl THF route): step 1/1. Its pathway is purine metabolism; IMP biosynthesis via de novo pathway; IMP from 5-formamido-1-(5-phospho-D-ribosyl)imidazole-4-carboxamide: step 1/1. This chain is Bifunctional purine biosynthesis protein PurH, found in Shewanella denitrificans (strain OS217 / ATCC BAA-1090 / DSM 15013).